The primary structure comprises 62 residues: Photosystem II reaction center protein Z (62 aa).

The next 2 helical transmembrane spans lie at 8–28 (TLLA…VLLA) and 41–61 (FSGS…NSFV).

The protein belongs to the PsbZ family. As to quaternary structure, PSII is composed of 1 copy each of membrane proteins PsbA, PsbB, PsbC, PsbD, PsbE, PsbF, PsbH, PsbI, PsbJ, PsbK, PsbL, PsbM, PsbT, PsbY, PsbZ, Psb30/Ycf12, at least 3 peripheral proteins of the oxygen-evolving complex and a large number of cofactors. It forms dimeric complexes.

Its subcellular location is the plastid. The protein resides in the chloroplast thylakoid membrane. In terms of biological role, may control the interaction of photosystem II (PSII) cores with the light-harvesting antenna, regulates electron flow through the 2 photosystem reaction centers. PSII is a light-driven water plastoquinone oxidoreductase, using light energy to abstract electrons from H(2)O, generating a proton gradient subsequently used for ATP formation. The chain is Photosystem II reaction center protein Z from Ostreococcus tauri.